The sequence spans 251 residues: uncharacterized protein (251 aa).

A signal peptide spans 1–15 (MSAISSLVLIGWAMC). Residues Asn-225 and Asn-242 are each glycosylated (N-linked (GlcNAc...) asparagine).

This is an uncharacterized protein from Encephalitozoon cuniculi (strain GB-M1) (Microsporidian parasite).